The chain runs to 298 residues: Flavin-dependent thymidylate synthase (298 aa).

The 211-residue stretch at 41–251 folds into the ThyX domain; that stretch reads GFVRLVDYMG…PLTYAAFVEY (211 aa). Residues Thr87, 110-112, and Glu118 contribute to the FAD site; that span reads RHR. DUMP is bound by residues 107-110, 118-122, and Arg190; these read QWVR and EYSAR. A ThyX motif motif is present at residues 110–120; that stretch reads RHRTANVNEYS. Residues 206 to 208 and His212 each bind FAD; that span reads DLH. Position 217 (Arg217) interacts with dUMP. Arg217 (involved in ionization of N3 of dUMP, leading to its activation) is an active-site residue.

It belongs to the thymidylate synthase ThyX family. In terms of assembly, homotetramer. FAD is required as a cofactor.

It catalyses the reaction dUMP + (6R)-5,10-methylene-5,6,7,8-tetrahydrofolate + NADPH + H(+) = dTMP + (6S)-5,6,7,8-tetrahydrofolate + NADP(+). Its pathway is pyrimidine metabolism; dTTP biosynthesis. Functionally, catalyzes the reductive methylation of 2'-deoxyuridine-5'-monophosphate (dUMP) to 2'-deoxythymidine-5'-monophosphate (dTMP) while utilizing 5,10-methylenetetrahydrofolate (mTHF) as the methyl donor, and NADPH and FADH(2) as the reductant. The protein is Flavin-dependent thymidylate synthase of Ehrlichia ruminantium (strain Welgevonden).